The sequence spans 410 residues: Formyl-CoA:oxalate CoA-transferase (410 aa).

Residues 18–19, 72–75, 96–98, Arg-104, and 136–139 contribute to the CoA site; these read QS, LNTK, NFG, and KAYE. Asp-168 (nucleophile) is an active-site residue. A disordered region spans residues 221 to 245; it reads PLAEYPNEDFGDEVPRSGNASGGGQ. 243-245 provides a ligand contact to substrate; that stretch reads GGQ.

This sequence belongs to the CoA-transferase III family. Frc subfamily. As to quaternary structure, homodimer.

The catalysed reaction is formyl-CoA + oxalate = oxalyl-CoA + formate. It participates in metabolic intermediate degradation; oxalate degradation; CO(2) and formate from oxalate: step 1/2. Functionally, involved in the catabolism of oxalate and in the adapatation to low pH via the induction of the oxalate-dependent acid tolerance response (ATR). Catalyzes the transfer of the CoA moiety from formyl-CoA to oxalate. This Streptomyces coelicolor (strain ATCC BAA-471 / A3(2) / M145) protein is Formyl-CoA:oxalate CoA-transferase.